The primary structure comprises 71 residues: Small ribosomal subunit protein eS31 (71 aa).

The Zn(2+) site is built by Cys-35, Cys-38, Cys-53, and Cys-56. The segment at 35-56 (CPKCGAGVFMAEHLNRYACGKC) adopts a C4-type zinc-finger fold.

Belongs to the eukaryotic ribosomal protein eS31 family. In terms of assembly, part of the 30S ribosomal subunit. Zn(2+) is required as a cofactor.

The polypeptide is Small ribosomal subunit protein eS31 (Methanococcus vannielii (strain ATCC 35089 / DSM 1224 / JCM 13029 / OCM 148 / SB)).